Consider the following 94-residue polypeptide: Viral macrophage inflammatory protein 2 (94 aa).

Positions 1-20 (MDTKGILLVAVLTALLCLQS) are cleaved as a signal peptide. Cystine bridges form between Cys34–Cys58 and Cys35–Cys74.

Belongs to the intercrine beta (chemokine CC) family. As to quaternary structure, monomer. Interacts with human chemokine receptor CXCR4.

It is found in the secreted. In terms of biological role, blocks infection by several different human immunodeficiency virus type 1 (HIV-1) strains. This occurs because vMIP-II binds to a wide range of chemokine receptors. May form part of the response to host defenses contributing to virus-induced neoplasia and may have relevance to KSHV and HIV-I interactions. The polypeptide is Viral macrophage inflammatory protein 2 (ORF K4) (Human herpesvirus 8 type P (isolate GK18) (HHV-8)).